Consider the following 434-residue polypeptide: Nicotinate phosphoribosyltransferase (434 aa).

Position 242 is a phosphohistidine; by autocatalysis (histidine 242).

It belongs to the NAPRTase family. In terms of processing, transiently phosphorylated on a His residue during the reaction cycle. Phosphorylation strongly increases the affinity for substrates and increases the rate of nicotinate D-ribonucleotide production. Dephosphorylation regenerates the low-affinity form of the enzyme, leading to product release.

The enzyme catalyses nicotinate + 5-phospho-alpha-D-ribose 1-diphosphate + ATP + H2O = nicotinate beta-D-ribonucleotide + ADP + phosphate + diphosphate. The protein operates within cofactor biosynthesis; NAD(+) biosynthesis; nicotinate D-ribonucleotide from nicotinate: step 1/1. Its function is as follows. Catalyzes the synthesis of beta-nicotinate D-ribonucleotide from nicotinate and 5-phospho-D-ribose 1-phosphate at the expense of ATP. The chain is Nicotinate phosphoribosyltransferase from Rhizobium etli (strain ATCC 51251 / DSM 11541 / JCM 21823 / NBRC 15573 / CFN 42).